We begin with the raw amino-acid sequence, 160 residues long: Transcription antitermination protein NusB (160 aa).

Belongs to the NusB family.

In terms of biological role, involved in transcription antitermination. Required for transcription of ribosomal RNA (rRNA) genes. Binds specifically to the boxA antiterminator sequence of the ribosomal RNA (rrn) operons. The polypeptide is Transcription antitermination protein NusB (Sinorhizobium fredii (strain NBRC 101917 / NGR234)).